The primary structure comprises 244 residues: tRNA (guanine-N(1)-)-methyltransferase (244 aa).

Residues glycine 113 and 132 to 137 each bind S-adenosyl-L-methionine; that span reads IGDYVL.

The protein belongs to the RNA methyltransferase TrmD family. As to quaternary structure, homodimer.

The protein resides in the cytoplasm. It catalyses the reaction guanosine(37) in tRNA + S-adenosyl-L-methionine = N(1)-methylguanosine(37) in tRNA + S-adenosyl-L-homocysteine + H(+). Specifically methylates guanosine-37 in various tRNAs. The protein is tRNA (guanine-N(1)-)-methyltransferase of Shouchella clausii (strain KSM-K16) (Alkalihalobacillus clausii).